The chain runs to 100 residues: uncharacterized protein (100 aa).

Transmembrane regions (helical) follow at residues 7-28 (TLIG…LLSL), 38-60 (AQLS…ILII), and 65-87 (LSAL…ANGV).

Its subcellular location is the cell membrane. This is an uncharacterized protein from Archaeoglobus fulgidus (strain ATCC 49558 / DSM 4304 / JCM 9628 / NBRC 100126 / VC-16).